Here is a 386-residue protein sequence, read N- to C-terminus: GTPase Obg (386 aa).

The 159-residue stretch at 4–162 (SNFVDYVKIY…RTVILQLKLL (159 aa)) folds into the Obg domain. Residues 18 to 44 (KGGRGSSHFRREKYIPKGGPDGGDGGR) form a disordered region. The OBG-type G domain occupies 163 to 329 (ADVGLVGFPN…LKDLLWKELN (167 aa)). GTP contacts are provided by residues 169 to 176 (GFPNAGKS), 194 to 198 (FTTLE), 216 to 219 (DIPG), 283 to 286 (TKSD), and 310 to 312 (SSI). Mg(2+) contacts are provided by Ser176 and Thr196. The segment at 357–386 (YIFPVDEDEDDPDEEYEEYWDDDEDEDTRK) is disordered.

This sequence belongs to the TRAFAC class OBG-HflX-like GTPase superfamily. OBG GTPase family. In terms of assembly, monomer. It depends on Mg(2+) as a cofactor.

Its subcellular location is the cytoplasm. Functionally, an essential GTPase which binds GTP, GDP and possibly (p)ppGpp with moderate affinity, with high nucleotide exchange rates and a fairly low GTP hydrolysis rate. Plays a role in control of the cell cycle, stress response, ribosome biogenesis and in those bacteria that undergo differentiation, in morphogenesis control. The protein is GTPase Obg of Parabacteroides distasonis (strain ATCC 8503 / DSM 20701 / CIP 104284 / JCM 5825 / NCTC 11152).